Reading from the N-terminus, the 126-residue chain is Cell cycle protein GpsB (126 aa).

The stretch at 35–72 (LDLVIKDYQTYQENIDRLTADNTRLFNKVEELNRQLSA) forms a coiled coil.

This sequence belongs to the GpsB family. Forms polymers through the coiled coil domains. Interacts with PBP1, MreC and EzrA.

It localises to the cytoplasm. Functionally, divisome component that associates with the complex late in its assembly, after the Z-ring is formed, and is dependent on DivIC and PBP2B for its recruitment to the divisome. Together with EzrA, is a key component of the system that regulates PBP1 localization during cell cycle progression. Its main role could be the removal of PBP1 from the cell pole after pole maturation is completed. Also contributes to the recruitment of PBP1 to the division complex. Not essential for septum formation. This chain is Cell cycle protein GpsB, found in Latilactobacillus sakei subsp. sakei (strain 23K) (Lactobacillus sakei subsp. sakei).